Reading from the N-terminus, the 591-residue chain is Frizzled-9 (591 aa).

A signal peptide spans 1 to 22 (MAVAPLRGALLLWQLLAAGGAA). Over 23 to 229 (LEIGRFDPER…EVFWSRRDKD (207 aa)) the chain is Extracellular. The region spanning 34 to 155 (RGAAPCQAVE…NDPHALCMEA (122 aa)) is the FZ domain. 5 disulfide bridges follow: C39/C100, C47/C93, C84/C122, C111/C152, and C115/C139. The N-linked (GlcNAc...) asparagine glycan is linked to N53. The segment at 58–172 (PNLLGHTSQG…PAEPHKGLGM (115 aa)) is required for Wnt-activated receptor activity. A glycan (N-linked (GlcNAc...) asparagine) is linked at N158. A helical transmembrane segment spans residues 230 to 250 (FALVWMAVWSALCFFSTAFTV). The Cytoplasmic portion of the chain corresponds to 251-266 (LTFLLEPHRFQYPERP). Residues 267 to 287 (IIFLSMCYNVYSLAFLIRAVA) traverse the membrane as a helical segment. Residues 288-315 (GAQSVACDQEAGALYVIQEGLENTGCTL) lie on the Extracellular side of the membrane. Residues 316–336 (VFLLLYYFGMASSLWWVVLTL) form a helical membrane-spanning segment. Residues 337–355 (TWFLAAGKKWGHEAIEAHG) are Cytoplasmic-facing. Residues 356–376 (SYFHMAAWGLPALKTIVILTL) traverse the membrane as a helical segment. Topologically, residues 377–400 (RKVAGDELTGLCYVASTDAAALTG) are extracellular. Residues 401–421 (FVLVPLSGYLVLGSSFLLTGF) form a helical membrane-spanning segment. Residues 422 to 447 (VALFHIRKIMKTGGTNTEKLEKLMVK) are Cytoplasmic-facing. Residues 448–468 (IGVFSILYTVPATCVIVCYVY) form a helical membrane-spanning segment. Residues 469 to 508 (ERLNMDFWRLRATEQPCAAAAGPGGRRDCSLPGGSVPTVA) lie on the Extracellular side of the membrane. A helical transmembrane segment spans residues 509-529 (VFMLKIFMSLVVGITSGVWVW). The Cytoplasmic portion of the chain corresponds to 530 to 591 (SSKTFQTWQS…DPSLENPTHL (62 aa)). Residues 532–537 (KTFQTW) carry the Lys-Thr-X-X-X-Trp motif, mediates interaction with the PDZ domain of Dvl family members motif. Positions 554-591 (ACRAPGSYGRGTHCHYKAPTVVLHMTKTDPSLENPTHL) are required for CTNNB1 accumulation and TCF transcription factor activity.

The protein belongs to the G-protein coupled receptor Fz/Smo family. Post-translationally, ubiquitinated by ZNRF3, leading to its degradation by the proteasome. As to expression, expressed predominantly in adult and fetal brain, testis, eye, skeletal muscle and kidney. Moderately expressed in pancreas, thyroid, adrenal cortex, small intestine and stomach. Detected in fetal liver and kidney. Expressed in neural progenitor cells.

Its subcellular location is the cell membrane. In terms of biological role, receptor for WNT2 that is coupled to the beta-catenin canonical signaling pathway, which leads to the activation of disheveled proteins, inhibition of GSK-3 kinase, nuclear accumulation of beta-catenin and activation of Wnt target genes. Plays a role in neuromuscular junction (NMJ) assembly by negatively regulating the clustering of acetylcholine receptors (AChR) through the beta-catenin canonical signaling pathway. May play a role in neural progenitor cells (NPCs) viability through the beta-catenin canonical signaling pathway by negatively regulating cell cycle arrest leading to inhibition of neuron apoptotic process. During hippocampal development, regulates neuroblast proliferation and apoptotic cell death. Controls bone formation through non canonical Wnt signaling mediated via ISG15. Positively regulates bone regeneration through non canonical Wnt signaling. The protein is Frizzled-9 (FZD9) of Homo sapiens (Human).